The sequence spans 734 residues: Exonuclease 1 (734 aa).

Positions 1–99 (MGIQGLLQFL…KARREKRQTN (99 aa)) are N-domain. The Mg(2+) site is built by Asp-30, Asp-78, Glu-150, Asp-152, Asp-171, Asp-173, and Asp-225. The I-domain stretch occupies residues 138–229 (RSEGVDYIVA…ILSGCDYLPS (92 aa)). Disordered stretches follow at residues 599–650 (EAEN…CQFT), 656–675 (AHQS…KVPG), and 685–716 (GLRT…NENV). Residues 604 to 620 (PSWQSSCIKSDTVSQID) are compositionally biased toward polar residues. Residues 621 to 641 (SNEKLLKKQDIEDTDSDEHAS) are compositionally biased toward basic and acidic residues. Residues 700–715 (GLTNRSNTKATRNNEN) show a composition bias toward polar residues.

This sequence belongs to the XPG/RAD2 endonuclease family. EXO1 subfamily. The cofactor is Mg(2+).

The protein resides in the nucleus. 5'-&gt;3' double-stranded DNA exonuclease which may also contain a cryptic 3'-&gt;5' double-stranded DNA exonuclease activity. Also exhibits endonuclease activity against 5'-overhanging flap structures similar to those generated by displacement synthesis when DNA polymerase encounters the 5'-end of a downstream Okazaki fragment. Required for DNA mismatch repair (MMR). The chain is Exonuclease 1 (exo1) from Xenopus laevis (African clawed frog).